The following is a 354-amino-acid chain: Uroporphyrinogen decarboxylase (354 aa).

Substrate contacts are provided by residues Arg27 to Arg31, Asp77, Tyr154, Thr209, and His327.

This sequence belongs to the uroporphyrinogen decarboxylase family. In terms of assembly, homodimer.

It localises to the cytoplasm. The catalysed reaction is uroporphyrinogen III + 4 H(+) = coproporphyrinogen III + 4 CO2. The protein operates within porphyrin-containing compound metabolism; protoporphyrin-IX biosynthesis; coproporphyrinogen-III from 5-aminolevulinate: step 4/4. Its function is as follows. Catalyzes the decarboxylation of four acetate groups of uroporphyrinogen-III to yield coproporphyrinogen-III. The protein is Uroporphyrinogen decarboxylase of Actinobacillus pleuropneumoniae serotype 5b (strain L20).